Here is a 243-residue protein sequence, read N- to C-terminus: Ribonuclease PH (243 aa).

Phosphate-binding positions include arginine 91 and 129-131 (GTR).

Belongs to the RNase PH family. As to quaternary structure, homohexameric ring arranged as a trimer of dimers.

The catalysed reaction is tRNA(n+1) + phosphate = tRNA(n) + a ribonucleoside 5'-diphosphate. Phosphorolytic 3'-5' exoribonuclease that plays an important role in tRNA 3'-end maturation. Removes nucleotide residues following the 3'-CCA terminus of tRNAs; can also add nucleotides to the ends of RNA molecules by using nucleoside diphosphates as substrates, but this may not be physiologically important. Probably plays a role in initiation of 16S rRNA degradation (leading to ribosome degradation) during starvation. In Burkholderia thailandensis (strain ATCC 700388 / DSM 13276 / CCUG 48851 / CIP 106301 / E264), this protein is Ribonuclease PH.